Here is a 280-residue protein sequence, read N- to C-terminus: Phospholipase C D (280 aa).

The tract at residues 258-280 (VPDPQIMPTQETTPTRGIPSGPC) is disordered.

It belongs to the bacterial phospholipase C family.

It is found in the secreted. Its subcellular location is the cell wall. It catalyses the reaction a 1,2-diacyl-sn-glycero-3-phosphocholine + H2O = phosphocholine + a 1,2-diacyl-sn-glycerol + H(+). The catalysed reaction is 1,2-dihexadecanoyl-sn-glycero-3-phosphocholine + H2O = 1,2-dihexadecanoyl-sn-glycerol + phosphocholine + H(+). Involved in virulence. Induces cytotoxic effects on mouse macrophage cell lines, via direct or indirect enzymatic hydrolysis of cell membrane phospholipids. Hydrolyzes phosphatidylcholine. Does not have hemolytic activity. The chain is Phospholipase C D from Mycobacterium tuberculosis (strain ATCC 25618 / H37Rv).